Here is a 293-residue protein sequence, read N- to C-terminus: MAGQPLRRPAWVPLLLRLLLAGIAACDASPADDSAGPGGRGPRGRARGDAGADEAVPRHDSSYGTFASEFYDLRYLSEEGYPFPTAPPVDPFAKIKVEDCGRTKGCFRYGKPGCNAETCDYFLSYRMIGADVEFELSADTDGWVAVGFSSDKKMGGDDVMACVHDDNGRVRIQHFYNVGQWAKEVQRNPARDEEGVFENNRVTCRFKRPVNVPRDETIVDLHLSWYYLFAWGPAIQGAITRHDIDSPPASERVVSIYKYEDIFMPSAAYQTFSSPFCLLLIVALTFYLLMGTP.

Positions 1-28 are cleaved as a signal peptide; it reads MAGQPLRRPAWVPLLLRLLLAGIAACDA. The segment at 29-60 is disordered; it reads SPADDSAGPGGRGPRGRARGDAGADEAVPRHD. Residues 46-60 are compositionally biased toward basic and acidic residues; that stretch reads ARGDAGADEAVPRHD. The 116-residue stretch at 119 to 234 folds into the DOMON domain; it reads CDYFLSYRMI…WYYLFAWGPA (116 aa). The helical transmembrane segment at 271–291 threads the bilayer; sequence TFSSPFCLLLIVALTFYLLMG.

As to quaternary structure, component of the outer core of AMPAR complex. AMPAR complex consists of an inner core made of 4 pore-forming GluA/GRIA proteins (GRIA1, GRIA2, GRIA3 and GRIA4) and 4 major auxiliary subunits arranged in a twofold symmetry. One of the two pairs of distinct binding sites is occupied either by CNIH2, CNIH3 or CACNG2, CACNG3. The other harbors CACNG2, CACNG3, CACNG4, CACNG8 or GSG1L. This inner core of AMPAR complex is complemented by outer core constituents binding directly to the GluA/GRIA proteins at sites distinct from the interaction sites of the inner core constituents. Outer core constituents include at least PRRT1, PRRT2, CKAMP44/SHISA9, FRRS1L and NRN1. The proteins of the inner and outer core serve as a platform for other, more peripherally associated AMPAR constituents. Alone or in combination, these auxiliary subunits control the gating and pharmacology of the AMPAR complex and profoundly impact their biogenesis and protein processing. In terms of tissue distribution, expressed in the brain (at protein level). In embryos expression is evident in the ventral forebrain, but a lower level is seen in the remainder of the embryos. In the adult brain, expressed in the cortex, cerebellum, hippocampus and basal ganglia.

The protein localises to the cell membrane. It is found in the synapse. Important modulator of glutamate signaling pathway. In Mus musculus (Mouse), this protein is DOMON domain-containing protein FRRS1L (Frrs1l).